Here is a 108-residue protein sequence, read N- to C-terminus: Evasin P1127 (108 aa).

The signal sequence occupies residues 1-28 (MEAKTFAFLEIAMFIALGIQTFVAVTDA). 3 disulfide bridges follow: cysteine 41/cysteine 63, cysteine 45/cysteine 65, and cysteine 56/cysteine 76. N-linked (GlcNAc...) asparagine glycosylation is present at asparagine 44. Asparagine 89 is a glycosylation site (N-linked (GlcNAc...) asparagine).

Its subcellular location is the secreted. Its function is as follows. Salivary chemokine-binding protein which binds to host chemokines CXCL1, CXCL2, CXCL3, CXCL5 and CXCL8. This Ixodes ricinus (Common tick) protein is Evasin P1127.